The chain runs to 1040 residues: ATPase family AAA domain-containing protein 2 (1040 aa).

Positions 1–11 are enriched in basic residues; that stretch reads MSLLKMRRHAI. A disordered region spans residues 1–30; sequence MSLLKMRRHAIHSSDSTSSSSSEDDCFERR. Phosphoserine is present on Ser65. 122–129 is an ATP binding site; the sequence is GPPGTGKT. Phosphoserine occurs at positions 401 and 406. Coiled-coil stretches lie at residues 619–643 and 735–761; these read LTAEEVKRLEEQEEDTFRELRIFLR and YAIIKEELDEDFEQLCEEIQESRKKRG. Residues 629 to 741 form the Bromo domain; it reads EQEEDTFREL…DTAYAIIKEE (113 aa). Residues 772-799 are disordered; it reads YHVMPKQNSPPVGDKKPDQEQNEKLKVP. Residues Lys777 and Lys797 each participate in a glycyl lysine isopeptide (Lys-Gly) (interchain with G-Cter in SUMO2) cross-link. The span at 784 to 797 shows a compositional bias: basic and acidic residues; the sequence is GDKKPDQEQNEKLK. Thr801 and Thr825 each carry phosphothreonine. Residues 811–833 show a composition bias toward basic residues; it reads LKRKFHKKSKWHVGTKIKRRKIS. Residues 811-935 form a disordered region; that stretch reads LKRKFHKKSK…SQVTDIPEDS (125 aa). Over residues 835-848 the composition is skewed to polar residues; the sequence is AKDNSLNAMNSSSR. 3 positions are modified to phosphoserine: Ser849, Ser883, and Ser891. Basic and acidic residues-rich tracts occupy residues 849-863 and 874-885; these read SDTEDSQHTHAEHTE and ESDKQNRLESNI. Over residues 901–919 the composition is skewed to basic and acidic residues; the sequence is EEPKETTEGTELRKDRIVC. Ser951 carries the post-translational modification Phosphoserine. Thr972 is subject to Phosphothreonine.

Belongs to the AAA ATPase family. Interacts with ESR1 and NCOA3 and these interactions are enhanced by estradiol. Interacts with acetylated lysine residues on histone H1.4, H2A, H2B and H3 (in vitro).

The protein resides in the nucleus. It carries out the reaction ATP + H2O = ADP + phosphate + H(+). Its function is as follows. May be a transcriptional coactivator of the nuclear receptor ESR1 required to induce the expression of a subset of estradiol target genes, such as CCND1, MYC and E2F1. May play a role in the recruitment or occupancy of CREBBP at some ESR1 target gene promoters. May be required for histone hyperacetylation. The chain is ATPase family AAA domain-containing protein 2 (Atad2) from Mus musculus (Mouse).